The sequence spans 390 residues: MAMSILAKIFLVFAIYCAIDPFSHSSISKFPDFKTYKIDMPPLSSLPKERDRQNLLQNSEIRFLNEVQGPESIAFDPQGRGPYTGVADGRILFWNGTRWTDFAYTSNNRSELCDPKPSLLDYLKDEDICGRPLGLRFDKKNGDLYIADAYLGIMKVGPEGGLATSVTNEADGVPLRFTNDLDIDDEGNVYFTDSSSFFQRRKFMLLIVSGEDSGRVLKYNPKTKETTTLVRNLQFPNGLSLGKDGSFFIFCEGSIGRLRKYWLKGEKAGTSEVVALLHGFPDNIRTNKDGDFWVAVHCHRNIFTHLMAHYPRVRKFFLKLPISVKFQYLLQVGGWPHAVAVKYSEEGKVLKVLEDSKGKVVKAVSEVEEKDGKLWMGSVLMSFIAVYDLP.

An N-terminal signal peptide occupies residues 1-25 (MAMSILAKIFLVFAIYCAIDPFSHS). N-linked (GlcNAc...) asparagine glycosylation is found at Asn95 and Asn108.

The protein belongs to the strictosidine synthase family.

It localises to the vacuole. This is Protein STRICTOSIDINE SYNTHASE-LIKE 3 from Arabidopsis thaliana (Mouse-ear cress).